The following is a 461-amino-acid chain: UDP-glycosyltransferase 82A1 (461 aa).

UDP-alpha-D-glucose-binding positions include Ser-292, 349-351, 366-374, and 388-391; these read APQ, HCGWNSTME, and AGDQ.

This sequence belongs to the UDP-glycosyltransferase family.

The sequence is that of UDP-glycosyltransferase 82A1 (UGT82A1) from Arabidopsis thaliana (Mouse-ear cress).